The primary structure comprises 142 residues: Large ribosomal subunit protein uL11 (142 aa).

It belongs to the universal ribosomal protein uL11 family. Part of the ribosomal stalk of the 50S ribosomal subunit. Interacts with L10 and the large rRNA to form the base of the stalk. L10 forms an elongated spine to which L12 dimers bind in a sequential fashion forming a multimeric L10(L12)X complex. Post-translationally, one or more lysine residues are methylated.

In terms of biological role, forms part of the ribosomal stalk which helps the ribosome interact with GTP-bound translation factors. The protein is Large ribosomal subunit protein uL11 of Sinorhizobium fredii (strain NBRC 101917 / NGR234).